The following is a 216-amino-acid chain: GTP cyclohydrolase 1 (216 aa).

Zn(2+) contacts are provided by Cys-108, His-111, and Cys-179.

It belongs to the GTP cyclohydrolase I family. As to quaternary structure, homomer.

The enzyme catalyses GTP + H2O = 7,8-dihydroneopterin 3'-triphosphate + formate + H(+). It functions in the pathway cofactor biosynthesis; 7,8-dihydroneopterin triphosphate biosynthesis; 7,8-dihydroneopterin triphosphate from GTP: step 1/1. This Shewanella baltica (strain OS223) protein is GTP cyclohydrolase 1.